A 493-amino-acid chain; its full sequence is Glutamyl-tRNA(Gln) amidotransferase subunit A (493 aa).

Active-site charge relay system residues include lysine 81 and serine 156. Catalysis depends on serine 180, which acts as the Acyl-ester intermediate.

The protein belongs to the amidase family. GatA subfamily. As to quaternary structure, heterotrimer of A, B and C subunits.

It catalyses the reaction L-glutamyl-tRNA(Gln) + L-glutamine + ATP + H2O = L-glutaminyl-tRNA(Gln) + L-glutamate + ADP + phosphate + H(+). Allows the formation of correctly charged Gln-tRNA(Gln) through the transamidation of misacylated Glu-tRNA(Gln) in organisms which lack glutaminyl-tRNA synthetase. The reaction takes place in the presence of glutamine and ATP through an activated gamma-phospho-Glu-tRNA(Gln). The protein is Glutamyl-tRNA(Gln) amidotransferase subunit A of Mycobacterium ulcerans (strain Agy99).